The following is a 351-amino-acid chain: Molybdenum import ATP-binding protein ModC (351 aa).

One can recognise an ABC transporter domain in the interval 1-229; sequence MLEINIHQQL…DILADWQSET (229 aa). 31–38 provides a ligand contact to ATP; the sequence is GRSGAGKS. One can recognise a Mop domain in the interval 290–351; it reads HSSIRNILNG…IYVQIKSVSL (62 aa).

This sequence belongs to the ABC transporter superfamily. Molybdate importer (TC 3.A.1.8) family. In terms of assembly, the complex is composed of two ATP-binding proteins (ModC), two transmembrane proteins (ModB) and a solute-binding protein (ModA).

Its subcellular location is the cell inner membrane. It carries out the reaction molybdate(out) + ATP + H2O = molybdate(in) + ADP + phosphate + H(+). In terms of biological role, part of the ABC transporter complex ModABC involved in molybdenum import. Responsible for energy coupling to the transport system. The sequence is that of Molybdenum import ATP-binding protein ModC from Haemophilus ducreyi (strain 35000HP / ATCC 700724).